Here is a 340-residue protein sequence, read N- to C-terminus: Ribose-phosphate pyrophosphokinase (340 aa).

ATP is bound by residues 47–49 (NGE) and 106–107 (RQ). Mg(2+)-binding residues include H140 and D182. Residue K206 is part of the active site. Residues R208, D234, and 238–242 (DTAGT) each bind D-ribose 5-phosphate.

This sequence belongs to the ribose-phosphate pyrophosphokinase family. Class I subfamily. In terms of assembly, homohexamer. Mg(2+) is required as a cofactor.

The protein resides in the cytoplasm. It catalyses the reaction D-ribose 5-phosphate + ATP = 5-phospho-alpha-D-ribose 1-diphosphate + AMP + H(+). The protein operates within metabolic intermediate biosynthesis; 5-phospho-alpha-D-ribose 1-diphosphate biosynthesis; 5-phospho-alpha-D-ribose 1-diphosphate from D-ribose 5-phosphate (route I): step 1/1. In terms of biological role, involved in the biosynthesis of the central metabolite phospho-alpha-D-ribosyl-1-pyrophosphate (PRPP) via the transfer of pyrophosphoryl group from ATP to 1-hydroxyl of ribose-5-phosphate (Rib-5-P). This chain is Ribose-phosphate pyrophosphokinase, found in Bifidobacterium longum (strain NCC 2705).